The primary structure comprises 470 residues: 3-isopropylmalate dehydratase large subunit (470 aa).

The disordered stretch occupies residues 50-121 (NVARGCQHRH…PCGRPGAGRH (72 aa)). [4Fe-4S] cluster is bound by residues Cys-349, Cys-409, and Cys-412.

It belongs to the aconitase/IPM isomerase family. LeuC type 1 subfamily. As to quaternary structure, heterodimer of LeuC and LeuD. [4Fe-4S] cluster serves as cofactor.

The enzyme catalyses (2R,3S)-3-isopropylmalate = (2S)-2-isopropylmalate. Its pathway is amino-acid biosynthesis; L-leucine biosynthesis; L-leucine from 3-methyl-2-oxobutanoate: step 2/4. Catalyzes the isomerization between 2-isopropylmalate and 3-isopropylmalate, via the formation of 2-isopropylmaleate. This chain is 3-isopropylmalate dehydratase large subunit, found in Azotobacter vinelandii.